A 294-amino-acid polypeptide reads, in one-letter code: ATP synthase gamma chain (294 aa).

It belongs to the ATPase gamma chain family. F-type ATPases have 2 components, CF(1) - the catalytic core - and CF(0) - the membrane proton channel. CF(1) has five subunits: alpha(3), beta(3), gamma(1), delta(1), epsilon(1). CF(0) has three main subunits: a, b and c.

Its subcellular location is the cell inner membrane. Produces ATP from ADP in the presence of a proton gradient across the membrane. The gamma chain is believed to be important in regulating ATPase activity and the flow of protons through the CF(0) complex. The protein is ATP synthase gamma chain of Nitrosomonas eutropha (strain DSM 101675 / C91 / Nm57).